We begin with the raw amino-acid sequence, 440 residues long: Probable carboxypeptidase AFUB_072730 (440 aa).

The N-terminal stretch at 1–16 (MKPLTSLLLSAALSAA) is a signal peptide. N-linked (GlcNAc...) asparagine glycans are attached at residues Asn-87 and Asn-149. Asp-165 serves as a coordination point for Zn(2+). The Proton acceptor role is filled by Glu-197. Glu-198 provides a ligand contact to Zn(2+). N-linked (GlcNAc...) asparagine glycosylation is found at Asn-353 and Asn-372.

The protein belongs to the peptidase M20A family. Requires Zn(2+) as cofactor.

The protein resides in the secreted. In Aspergillus fumigatus (strain CBS 144.89 / FGSC A1163 / CEA10) (Neosartorya fumigata), this protein is Probable carboxypeptidase AFUB_072730.